Here is an 868-residue protein sequence, read N- to C-terminus: Protein translocase subunit SecA (868 aa).

ATP contacts are provided by residues glutamine 85, 103–107 (GEGKT), and aspartate 508.

This sequence belongs to the SecA family. As to quaternary structure, monomer and homodimer. Part of the essential Sec protein translocation apparatus which comprises SecA, SecYEG and auxiliary proteins SecDF. Other proteins may also be involved.

Its subcellular location is the cell membrane. The protein resides in the cytoplasm. It catalyses the reaction ATP + H2O + cellular proteinSide 1 = ADP + phosphate + cellular proteinSide 2.. Its function is as follows. Part of the Sec protein translocase complex. Interacts with the SecYEG preprotein conducting channel. Has a central role in coupling the hydrolysis of ATP to the transfer of proteins into and across the cell membrane, serving as an ATP-driven molecular motor driving the stepwise translocation of polypeptide chains across the membrane. In Deinococcus radiodurans (strain ATCC 13939 / DSM 20539 / JCM 16871 / CCUG 27074 / LMG 4051 / NBRC 15346 / NCIMB 9279 / VKM B-1422 / R1), this protein is Protein translocase subunit SecA.